Reading from the N-terminus, the 355-residue chain is Phosphoribosylformylglycinamidine cyclo-ligase (355 aa).

This sequence belongs to the AIR synthase family.

Its subcellular location is the cytoplasm. The catalysed reaction is 2-formamido-N(1)-(5-O-phospho-beta-D-ribosyl)acetamidine + ATP = 5-amino-1-(5-phospho-beta-D-ribosyl)imidazole + ADP + phosphate + H(+). It participates in purine metabolism; IMP biosynthesis via de novo pathway; 5-amino-1-(5-phospho-D-ribosyl)imidazole from N(2)-formyl-N(1)-(5-phospho-D-ribosyl)glycinamide: step 2/2. This is Phosphoribosylformylglycinamidine cyclo-ligase from Beijerinckia indica subsp. indica (strain ATCC 9039 / DSM 1715 / NCIMB 8712).